A 231-amino-acid polypeptide reads, in one-letter code: Large ribosomal subunit protein uL1 (231 aa).

It belongs to the universal ribosomal protein uL1 family. Part of the 50S ribosomal subunit.

In terms of biological role, binds directly to 23S rRNA. The L1 stalk is quite mobile in the ribosome, and is involved in E site tRNA release. Its function is as follows. Protein L1 is also a translational repressor protein, it controls the translation of the L11 operon by binding to its mRNA. This chain is Large ribosomal subunit protein uL1, found in Methylococcus capsulatus (strain ATCC 33009 / NCIMB 11132 / Bath).